The following is a 370-amino-acid chain: Chloromuconate cycloisomerase (370 aa).

Catalysis depends on lysine 165, which acts as the Proton acceptor. Mn(2+) contacts are provided by aspartate 194, glutamate 220, and aspartate 245. The Proton donor role is filled by glutamate 323.

It belongs to the mandelate racemase/muconate lactonizing enzyme family. Mn(2+) serves as cofactor.

The enzyme catalyses 2-[(2R)-2-chloro-2,5-dihydro-5-oxofuryl]acetate = 3-chloro-cis,cis-muconate + H(+). It participates in aromatic compound metabolism; 3-chlorocatechol degradation. The chain is Chloromuconate cycloisomerase (tcbD) from Pseudomonas sp. (strain P51).